An 80-amino-acid chain; its full sequence is Defensin-like protein 46 (80 aa).

Positions 1–27 (MGSTKTLVTCFLTIILAVSLSNHNVLA) are cleaved as a signal peptide. Intrachain disulfides connect Cys40–Cys78, Cys44–Cys65, Cys50–Cys76, and Cys54–Cys77.

The protein belongs to the DEFL family.

It localises to the secreted. This is Defensin-like protein 46 from Arabidopsis thaliana (Mouse-ear cress).